The primary structure comprises 336 residues: Ketol-acid reductoisomerase (NADP(+)) (336 aa).

A KARI N-terminal Rossmann domain is found at 1-182; it reads MAVIYYDKDA…GVTRAGVIET (182 aa). NADP(+) contacts are provided by residues 25–28, arginine 48, serine 51, serine 53, and 83–86; these read YGSQ and DEHQ. Residue histidine 108 is part of the active site. Glycine 134 serves as a coordination point for NADP(+). The KARI C-terminal knotted domain occupies 183–328; that stretch reads TFKEETETDL…KELRKMMPWL (146 aa). Aspartate 191, glutamate 195, glutamate 227, and glutamate 231 together coordinate Mg(2+). Residue serine 252 coordinates substrate.

This sequence belongs to the ketol-acid reductoisomerase family. Mg(2+) is required as a cofactor.

The enzyme catalyses (2R)-2,3-dihydroxy-3-methylbutanoate + NADP(+) = (2S)-2-acetolactate + NADPH + H(+). The catalysed reaction is (2R,3R)-2,3-dihydroxy-3-methylpentanoate + NADP(+) = (S)-2-ethyl-2-hydroxy-3-oxobutanoate + NADPH + H(+). Its pathway is amino-acid biosynthesis; L-isoleucine biosynthesis; L-isoleucine from 2-oxobutanoate: step 2/4. It functions in the pathway amino-acid biosynthesis; L-valine biosynthesis; L-valine from pyruvate: step 2/4. Involved in the biosynthesis of branched-chain amino acids (BCAA). Catalyzes an alkyl-migration followed by a ketol-acid reduction of (S)-2-acetolactate (S2AL) to yield (R)-2,3-dihydroxy-isovalerate. In the isomerase reaction, S2AL is rearranged via a Mg-dependent methyl migration to produce 3-hydroxy-3-methyl-2-ketobutyrate (HMKB). In the reductase reaction, this 2-ketoacid undergoes a metal-dependent reduction by NADPH to yield (R)-2,3-dihydroxy-isovalerate. The chain is Ketol-acid reductoisomerase (NADP(+)) from Thermotoga maritima (strain ATCC 43589 / DSM 3109 / JCM 10099 / NBRC 100826 / MSB8).